Consider the following 334-residue polypeptide: Holliday junction branch migration complex subunit RuvB (334 aa).

The tract at residues 1–181 (MTRILDNDLM…FGITGHMEYY (181 aa)) is large ATPase domain (RuvB-L). Residues L20, R21, G62, K65, T66, T67, 128 to 130 (EDF), R171, Y181, and R218 each bind ATP. T66 is a binding site for Mg(2+). The segment at 182–252 (QVDDLTEIVE…MTDKALEMLD (71 aa)) is small ATPAse domain (RuvB-S). The head domain (RuvB-H) stretch occupies residues 255-334 (HEGLDYVDQK…LKYPLDTKTE (80 aa)). Positions 291, 310, 312, and 315 each coordinate DNA.

The protein belongs to the RuvB family. In terms of assembly, homohexamer. Forms an RuvA(8)-RuvB(12)-Holliday junction (HJ) complex. HJ DNA is sandwiched between 2 RuvA tetramers; dsDNA enters through RuvA and exits via RuvB. An RuvB hexamer assembles on each DNA strand where it exits the tetramer. Each RuvB hexamer is contacted by two RuvA subunits (via domain III) on 2 adjacent RuvB subunits; this complex drives branch migration. In the full resolvosome a probable DNA-RuvA(4)-RuvB(12)-RuvC(2) complex forms which resolves the HJ.

The protein resides in the cytoplasm. The catalysed reaction is ATP + H2O = ADP + phosphate + H(+). Its function is as follows. The RuvA-RuvB-RuvC complex processes Holliday junction (HJ) DNA during genetic recombination and DNA repair, while the RuvA-RuvB complex plays an important role in the rescue of blocked DNA replication forks via replication fork reversal (RFR). RuvA specifically binds to HJ cruciform DNA, conferring on it an open structure. The RuvB hexamer acts as an ATP-dependent pump, pulling dsDNA into and through the RuvAB complex. RuvB forms 2 homohexamers on either side of HJ DNA bound by 1 or 2 RuvA tetramers; 4 subunits per hexamer contact DNA at a time. Coordinated motions by a converter formed by DNA-disengaged RuvB subunits stimulates ATP hydrolysis and nucleotide exchange. Immobilization of the converter enables RuvB to convert the ATP-contained energy into a lever motion, pulling 2 nucleotides of DNA out of the RuvA tetramer per ATP hydrolyzed, thus driving DNA branch migration. The RuvB motors rotate together with the DNA substrate, which together with the progressing nucleotide cycle form the mechanistic basis for DNA recombination by continuous HJ branch migration. Branch migration allows RuvC to scan DNA until it finds its consensus sequence, where it cleaves and resolves cruciform DNA. In Streptococcus uberis (strain ATCC BAA-854 / 0140J), this protein is Holliday junction branch migration complex subunit RuvB.